A 178-amino-acid chain; its full sequence is MAEAITIARPYAEAVFKLARESGSLFSWSETLDAVNSIVRESQIRELISNPLISSVKLREIIFSVCGKKLNEDGKRLVSLLIDNQRLLVMPQIHELFEQLKAQHESILEAEVVSAFPLDSGQLEKLVSILEAKFQRKVKAEVSVDSELIGGVRIKIGDQVVDSSVHGKLEAMATALKS.

It belongs to the ATPase delta chain family. F-type ATPases have 2 components, F(1) - the catalytic core - and F(0) - the membrane proton channel. F(1) has five subunits: alpha(3), beta(3), gamma(1), delta(1), epsilon(1). F(0) has three main subunits: a(1), b(2) and c(10-14). The alpha and beta chains form an alternating ring which encloses part of the gamma chain. F(1) is attached to F(0) by a central stalk formed by the gamma and epsilon chains, while a peripheral stalk is formed by the delta and b chains.

It is found in the cell inner membrane. In terms of biological role, f(1)F(0) ATP synthase produces ATP from ADP in the presence of a proton or sodium gradient. F-type ATPases consist of two structural domains, F(1) containing the extramembraneous catalytic core and F(0) containing the membrane proton channel, linked together by a central stalk and a peripheral stalk. During catalysis, ATP synthesis in the catalytic domain of F(1) is coupled via a rotary mechanism of the central stalk subunits to proton translocation. Its function is as follows. This protein is part of the stalk that links CF(0) to CF(1). It either transmits conformational changes from CF(0) to CF(1) or is implicated in proton conduction. The protein is ATP synthase subunit delta of Nitrosomonas europaea (strain ATCC 19718 / CIP 103999 / KCTC 2705 / NBRC 14298).